The primary structure comprises 1427 residues: Multidrug resistance-associated protein 5 (1427 aa).

The Cytoplasmic segment spans residues M1–W147. A helical membrane pass occupies residues F148–I168. One can recognise an ABC transmembrane type-1 1 domain in the interval A151 to E432. Residues R169–R185 are Extracellular-facing. The helical transmembrane segment at I186 to V206 threads the bilayer. Residues L207–P268 are Cytoplasmic-facing. A helical transmembrane segment spans residues L269 to G289. A topological domain (extracellular) is located at residue R290. Residues W291–K311 form a helical membrane-spanning segment. The Cytoplasmic segment spans residues S312 to A375. The helical transmembrane segment at I376–L396 threads the bilayer. Residues A397–N399 are Extracellular-facing. The chain crosses the membrane as a helical span at residues D400–I420. Topologically, residues R421–Y770 are cytoplasmic. Positions P486 to A707 constitute an ABC transporter 1 domain. Position 518–525 (G518–S525) interacts with ATP. Residues I771–V791 traverse the membrane as a helical segment. Residues L783–A1078 form the ABC transmembrane type-1 2 domain. The Extracellular portion of the chain corresponds to V792 to V833. N-linked (GlcNAc...) asparagine glycosylation is present at N817. Residues T834 to F854 traverse the membrane as a helical segment. Topologically, residues K855–L909 are cytoplasmic. A helical transmembrane segment spans residues P910–I930. Residue T931 is a topological domain, extracellular. The helical transmembrane segment at S932–V952 threads the bilayer. The Cytoplasmic portion of the chain corresponds to S953 to A1022. Residues V1023–L1043 traverse the membrane as a helical segment. At T1044–P1049 the chain is on the extracellular side. The helical transmembrane segment at A1050 to V1070 threads the bilayer. Topologically, residues R1071–Q1427 are cytoplasmic. Positions I1117–K1351 constitute an ABC transporter 2 domain. G1151–S1158 lines the ATP pocket. Positions V1361–Q1427 are disordered. Positions D1382–S1418 are enriched in basic and acidic residues.

Belongs to the ABC transporter superfamily. ABCC family. Conjugate transporter (TC 3.A.1.208) subfamily. In terms of tissue distribution, highly expressed in the intestine and pharynx. Expressed at low levels in the hypodermis and in some neurons.

The protein resides in the basolateral cell membrane. Functionally, heme transporter required for the export of intestinal heme to different tissues and subcellular compartments. Also, required for the export of vitamin B12 from the intestine of the mother to the embryo to support embryonic development. This is Multidrug resistance-associated protein 5 from Caenorhabditis elegans.